Consider the following 1419-residue polypeptide: L-2-aminoadipate reductase (1419 aa).

The Carrier domain occupies 880–956 (ETLTATERDI…GLAKEIERMK (77 aa)). Position 916 is an O-(pantetheine 4'-phosphoryl)serine (Ser-916).

Belongs to the ATP-dependent AMP-binding enzyme family. Pantetheine 4'-phosphate is required as a cofactor.

The protein localises to the cytoplasm. It carries out the reaction (S)-2-amino-6-oxohexanoate + NADP(+) + H2O = L-2-aminoadipate + NADPH + 2 H(+). The enzyme catalyses (S)-2-amino-6-oxohexanoate + NAD(+) + H2O = L-2-aminoadipate + NADH + 2 H(+). It catalyses the reaction (S)-2-amino-6-oxohexanoate + AMP + diphosphate + NADP(+) = L-2-aminoadipate + ATP + NADPH + H(+). Its pathway is amino-acid biosynthesis; L-lysine biosynthesis via AAA pathway; L-lysine from L-alpha-aminoadipate (fungal route): step 1/3. Catalyzes the activation of alpha-aminoadipate by ATP-dependent adenylation and the reduction of activated alpha-aminoadipate by NADPH. The activated alpha-aminoadipate is bound to the phosphopantheinyl group of the enzyme itself before it is reduced to (S)-2-amino-6-oxohexanoate. The sequence is that of L-2-aminoadipate reductase (lys1) from Schizosaccharomyces pombe (strain 972 / ATCC 24843) (Fission yeast).